The sequence spans 128 residues: Protein ripply2 (128 aa).

The tract at residues 1-63 is disordered; it reads MENAGGAEGT…HAAEAMPDGP (63 aa). Low complexity predominate over residues 9 to 22; that stretch reads GTESGAAACAATDG. A WRPW motif motif is present at residues 37–40; sequence WRPW. Residues 77–112 are ripply homology domain; it reads HPVRLFWPKSKCYDYLYQEAEALLKNFPIQATISFY.

This sequence belongs to the ripply family.

The protein localises to the nucleus. In terms of biological role, plays a role in somitogenesis. Required for somite segregation and establishment of rostrocaudal polarity in somites. This Homo sapiens (Human) protein is Protein ripply2 (RIPPLY2).